Reading from the N-terminus, the 463-residue chain is 23S rRNA (uracil(1939)-C(5))-methyltransferase RlmD (463 aa).

The 65-residue stretch at 14–78 folds into the TRAM domain; the sequence is AVAPGSDPVV…PSYEQAHLLE (65 aa). The [4Fe-4S] cluster site is built by Cys91, Cys97, Cys100, and Cys179. S-adenosyl-L-methionine is bound by residues Gln287, Phe316, Asn321, Glu337, Asn365, and Asp386. Cys419 (nucleophile) is an active-site residue.

The protein belongs to the class I-like SAM-binding methyltransferase superfamily. RNA M5U methyltransferase family. RlmD subfamily.

It catalyses the reaction uridine(1939) in 23S rRNA + S-adenosyl-L-methionine = 5-methyluridine(1939) in 23S rRNA + S-adenosyl-L-homocysteine + H(+). Functionally, catalyzes the formation of 5-methyl-uridine at position 1939 (m5U1939) in 23S rRNA. The chain is 23S rRNA (uracil(1939)-C(5))-methyltransferase RlmD from Cupriavidus pinatubonensis (strain JMP 134 / LMG 1197) (Cupriavidus necator (strain JMP 134)).